The sequence spans 439 residues: Probable cinnamyl alcohol dehydrogenase 8C (439 aa).

Cysteine 120 serves as a coordination point for Zn(2+). Residue threonine 122 participates in NADP(+) binding. Zn(2+) is bound by residues histidine 142, glutamate 143, cysteine 173, cysteine 176, cysteine 179, cysteine 187, and cysteine 239. NADP(+) is bound by residues threonine 243, 264–269 (GLGGLG), 287–292 (STSPGK), threonine 327, glycine 351, and 374–376 (NCV).

It belongs to the zinc-containing alcohol dehydrogenase family. As to quaternary structure, homodimer. The cofactor is Zn(2+).

It carries out the reaction (E)-cinnamyl alcohol + NADP(+) = (E)-cinnamaldehyde + NADPH + H(+). The catalysed reaction is (E)-coniferol + NADP(+) = (E)-coniferaldehyde + NADPH + H(+). It catalyses the reaction (E)-sinapyl alcohol + NADP(+) = (E)-sinapaldehyde + NADPH + H(+). The enzyme catalyses (E)-4-coumaroyl alcohol + NADP(+) = (E)-4-coumaraldehyde + NADPH + H(+). It carries out the reaction (E)-caffeyl alcohol + NADP(+) = (E)-caffeyl aldehyde + NADPH + H(+). It participates in aromatic compound metabolism; phenylpropanoid biosynthesis. Functionally, involved in lignin biosynthesis. Catalyzes the final step specific for the production of lignin monomers. Catalyzes the NADPH-dependent reduction of coniferaldehyde, 5-hydroxyconiferaldehyde, sinapaldehyde, 4-coumaraldehyde and caffeyl aldehyde to their respective alcohols. The chain is Probable cinnamyl alcohol dehydrogenase 8C from Oryza sativa subsp. japonica (Rice).